We begin with the raw amino-acid sequence, 485 residues long: Benzaldehyde dehydrogenase YfmT (485 aa).

231–236 serves as a coordination point for NAD(+); that stretch reads GSTKVG. Residues glutamate 253 and cysteine 287 contribute to the active site.

This sequence belongs to the aldehyde dehydrogenase family.

It carries out the reaction benzaldehyde + NAD(+) + H2O = benzoate + NADH + 2 H(+). The enzyme catalyses vanillin + NAD(+) + H2O = vanillate + NADH + 2 H(+). In terms of biological role, a benzaldehyde dehydrogenase able to act on substrates with 3- and 4-hydroxy and methoxy substitutions; converts vanillin (4-hydroxy-3-methoxybenzaldehyde) to vanillic acid in vitro. The physiological substrate is unknown. The sequence is that of Benzaldehyde dehydrogenase YfmT (yfmT) from Bacillus subtilis (strain 168).